A 384-amino-acid chain; its full sequence is Probable endopolygalacturonase C (384 aa).

A signal peptide spans 1 to 19; sequence MVRQLALACGLLAAVAVQA. Residues 20 to 40 constitute a propeptide that is removed on maturation; it reads APAEPAHPMVTEAPDASLLHK. C45 and C63 are oxidised to a cystine. PbH1 repeat units follow at residues 176–207 and 208–229; these read ATDL…DIGE and STDI…AINS. D222 serves as the catalytic Proton donor. The cysteines at positions 224 and 240 are disulfide-linked. H244 is a catalytic residue. PbH1 repeat units follow at residues 254–280 and 288–310; these read RDDN…RIKA and ISDI…VIEQ. N-linked (GlcNAc...) asparagine glycosylation occurs at N261. Disulfide bonds link C349–C354 and C373–C382.

It belongs to the glycosyl hydrolase 28 family.

The protein localises to the secreted. It catalyses the reaction (1,4-alpha-D-galacturonosyl)n+m + H2O = (1,4-alpha-D-galacturonosyl)n + (1,4-alpha-D-galacturonosyl)m.. Involved in maceration and soft-rotting of plant tissue. Hydrolyzes the 1,4-alpha glycosidic bonds of de-esterified pectate in the smooth region of the plant cell wall. The sequence is that of Probable endopolygalacturonase C (pgaC) from Aspergillus aculeatus.